Consider the following 315-residue polypeptide: Cobalamin biosynthesis protein CobD (315 aa).

5 helical membrane passes run 48 to 68 (IAGFFAWLFIVFITFGVTLGI), 77 to 97 (PILGTVVSGILIYFCISAKGL), 150 to 170 (DGIIAPLFFAGIGGAPLAFLY), 200 to 220 (VFNYIPARLTAYLIVISSFIL), and 295 to 315 (MVSFLGMVVALIIRCILEVII).

This sequence belongs to the CobD/CbiB family.

The protein localises to the cell membrane. It participates in cofactor biosynthesis; adenosylcobalamin biosynthesis. Functionally, converts cobyric acid to cobinamide by the addition of aminopropanol on the F carboxylic group. The polypeptide is Cobalamin biosynthesis protein CobD (Clostridium perfringens (strain 13 / Type A)).